A 500-amino-acid polypeptide reads, in one-letter code: Lysine--tRNA ligase (500 aa).

Mg(2+) contacts are provided by glutamate 410 and glutamate 417.

This sequence belongs to the class-II aminoacyl-tRNA synthetase family. As to quaternary structure, homodimer. It depends on Mg(2+) as a cofactor.

The protein resides in the cytoplasm. The catalysed reaction is tRNA(Lys) + L-lysine + ATP = L-lysyl-tRNA(Lys) + AMP + diphosphate. This Shewanella sp. (strain ANA-3) protein is Lysine--tRNA ligase.